Here is a 102-residue protein sequence, read N- to C-terminus: Large ribosomal subunit protein bL21 (102 aa).

Residues 79-91 show a composition bias toward basic residues; that stretch reads RKDSKRKKGHRQP. A disordered region spans residues 79–102; it reads RKDSKRKKGHRQPYTKLTIDKINA.

Belongs to the bacterial ribosomal protein bL21 family. In terms of assembly, part of the 50S ribosomal subunit. Contacts protein L20.

This protein binds to 23S rRNA in the presence of protein L20. The polypeptide is Large ribosomal subunit protein bL21 (Staphylococcus carnosus (strain TM300)).